The chain runs to 183 residues: MKNVTHSFVFLAHWPSAGSFGLNTDILATNLINLTVVVGVLIFFGKGVLKDLLDNRKQRILSTIRNSEELRRGTFEQLEKARIRLQKVELEADEYRMNGYSEIEREKENLINATSISLEQLEKSKNETLYFEKQRAMNQVRQRVFQQAVQGALGTLNSCLNTELHFRTIRANIGILGSMEWKR.

Residues 27 to 49 (LATNLINLTVVVGVLIFFGKGVL) form a helical membrane-spanning segment.

Belongs to the ATPase B chain family. F-type ATPases have 2 components, F(1) - the catalytic core - and F(0) - the membrane proton channel. F(1) has five subunits: alpha(3), beta(3), gamma(1), delta(1), epsilon(1). F(0) has four main subunits: a(1), b(1), b'(1) and c(10-14). The alpha and beta chains form an alternating ring which encloses part of the gamma chain. F(1) is attached to F(0) by a central stalk formed by the gamma and epsilon chains, while a peripheral stalk is formed by the delta, b and b' chains.

The protein resides in the plastid. Its subcellular location is the chloroplast thylakoid membrane. Functionally, f(1)F(0) ATP synthase produces ATP from ADP in the presence of a proton or sodium gradient. F-type ATPases consist of two structural domains, F(1) containing the extramembraneous catalytic core and F(0) containing the membrane proton channel, linked together by a central stalk and a peripheral stalk. During catalysis, ATP synthesis in the catalytic domain of F(1) is coupled via a rotary mechanism of the central stalk subunits to proton translocation. Its function is as follows. Component of the F(0) channel, it forms part of the peripheral stalk, linking F(1) to F(0). The polypeptide is ATP synthase subunit b, chloroplastic (Brachypodium distachyon (Purple false brome)).